Consider the following 743-residue polypeptide: Peptide transporter family 1 (743 aa).

Residues 1–28 (MASEITNGKNGQNGKNGQKEESDSQIAP) form a disordered region. A compositionally biased stretch (low complexity) spans 7–16 (NGKNGQNGKN). A run of 10 helical transmembrane segments spans residues 74–94 (VLFH…ALIA), 104–124 (ILYL…GAVP), 132–152 (AVTV…KPCV), 173–193 (FSLF…FTPI), 207–227 (FSLA…IFMA), 334–354 (VVNP…IYPA), 364–384 (LQKL…SAGL), 597–619 (LPQI…EFSY), 629–649 (VLQA…VVIA), and 659–679 (GEFT…LWLA).

The protein belongs to the major facilitator superfamily. Proton-dependent oligopeptide transporter (POT/PTR) (TC 2.A.17) family. As to expression, expressed in thorax and abdomen of females: apical epithelial membranes of midgut, rectum, and reproductive tract. Also expressed in neuropil of the central nervous system, with elevated expression within the alpha- and beta-lobes of the mushroom bodies.

The protein resides in the membrane. In terms of biological role, important role in absorption of dietary peptides. High-affinity transporter of alanylalanine. Dipeptide transport activity is proton dependent. This Drosophila melanogaster (Fruit fly) protein is Peptide transporter family 1 (yin).